The primary structure comprises 287 residues: Protease HtpX (287 aa).

2 helical membrane-spanning segments follow: residues I4–I24 and L36–L56. H143 provides a ligand contact to Zn(2+). Residue E144 is part of the active site. H147 contacts Zn(2+). Helical transmembrane passes span L158 to V178 and M192 to I212. E221 serves as a coordination point for Zn(2+).

It belongs to the peptidase M48B family. Zn(2+) is required as a cofactor.

The protein resides in the cell inner membrane. This Vibrio cholerae serotype O1 (strain ATCC 39315 / El Tor Inaba N16961) protein is Protease HtpX.